We begin with the raw amino-acid sequence, 427 residues long: 3-phosphoshikimate 1-carboxyvinyltransferase (427 aa).

3 residues coordinate 3-phosphoshikimate: K22, S23, and R27. K22 provides a ligand contact to phosphoenolpyruvate. Positions 96 and 124 each coordinate phosphoenolpyruvate. 3-phosphoshikimate is bound by residues S169, S170, Q171, S197, D313, N336, and K340. A phosphoenolpyruvate-binding site is contributed by Q171. D313 acts as the Proton acceptor in catalysis. Phosphoenolpyruvate-binding residues include R344, R386, and K411.

This sequence belongs to the EPSP synthase family. As to quaternary structure, monomer.

It localises to the cytoplasm. The enzyme catalyses 3-phosphoshikimate + phosphoenolpyruvate = 5-O-(1-carboxyvinyl)-3-phosphoshikimate + phosphate. It functions in the pathway metabolic intermediate biosynthesis; chorismate biosynthesis; chorismate from D-erythrose 4-phosphate and phosphoenolpyruvate: step 6/7. Catalyzes the transfer of the enolpyruvyl moiety of phosphoenolpyruvate (PEP) to the 5-hydroxyl of shikimate-3-phosphate (S3P) to produce enolpyruvyl shikimate-3-phosphate and inorganic phosphate. This chain is 3-phosphoshikimate 1-carboxyvinyltransferase, found in Salmonella typhi.